The chain runs to 174 residues: tRNA (cytidine(56)-2'-O)-methyltransferase (174 aa).

Residues leucine 80, 105–109 (GAEKV), and 123–130 (ISNQPHSE) contribute to the S-adenosyl-L-methionine site.

This sequence belongs to the aTrm56 family. In terms of assembly, homodimer.

Its subcellular location is the cytoplasm. The catalysed reaction is cytidine(56) in tRNA + S-adenosyl-L-methionine = 2'-O-methylcytidine(56) in tRNA + S-adenosyl-L-homocysteine + H(+). Functionally, specifically catalyzes the AdoMet-dependent 2'-O-ribose methylation of cytidine at position 56 in tRNAs. This chain is tRNA (cytidine(56)-2'-O)-methyltransferase, found in Metallosphaera sedula (strain ATCC 51363 / DSM 5348 / JCM 9185 / NBRC 15509 / TH2).